The following is a 223-amino-acid chain: Ubiquitin carboxyl-terminal hydrolase isozyme L1 (223 aa).

Methionine 1 carries the N-acetylmethionine modification. Residues 2–221 (QLKPMEINPE…VRFSAVALCK (220 aa)) enclose the UCH catalytic domain. The tract at residues 5 to 10 (PMEINP) is interaction with ubiquitin. The active-site Nucleophile is cysteine 90. Serine 125 is modified (phosphoserine). The Proton donor role is filled by histidine 161. Residues 211–216 (EVRFSA) are interaction with ubiquitin. A lipid anchor (S-farnesyl cysteine) is attached at cysteine 220. Positions 221-223 (KCA) are cleaved as a propeptide — removed in mature form.

It belongs to the peptidase C12 family. As to quaternary structure, monomer. Homodimer. Interacts with COPS5 and SNCA. Post-translationally, O-glycosylated.

It localises to the cytoplasm. It is found in the endoplasmic reticulum membrane. The enzyme catalyses Thiol-dependent hydrolysis of ester, thioester, amide, peptide and isopeptide bonds formed by the C-terminal Gly of ubiquitin (a 76-residue protein attached to proteins as an intracellular targeting signal).. Functionally, ubiquitin-protein hydrolase involved both in the processing of ubiquitin precursors and of ubiquitinated proteins. This enzyme is a thiol protease that recognizes and hydrolyzes a peptide bond at the C-terminal glycine of ubiquitin. Also binds to free monoubiquitin and may prevent its degradation in lysosomes. The homodimer may have ATP-independent ubiquitin ligase activity. This Monodelphis domestica (Gray short-tailed opossum) protein is Ubiquitin carboxyl-terminal hydrolase isozyme L1 (UCHL1).